The chain runs to 130 residues: Small ribosomal subunit protein uS9 (130 aa).

A disordered region spans residues 111-130 (KERRKYGLKKARKAPQFSKR).

The protein belongs to the universal ribosomal protein uS9 family.

The chain is Small ribosomal subunit protein uS9 from Thermoanaerobacter sp. (strain X514).